A 185-amino-acid polypeptide reads, in one-letter code: Elongation factor P (185 aa).

Belongs to the elongation factor P family.

The protein localises to the cytoplasm. Its pathway is protein biosynthesis; polypeptide chain elongation. Functionally, involved in peptide bond synthesis. Stimulates efficient translation and peptide-bond synthesis on native or reconstituted 70S ribosomes in vitro. Probably functions indirectly by altering the affinity of the ribosome for aminoacyl-tRNA, thus increasing their reactivity as acceptors for peptidyl transferase. In Bacillus cereus (strain B4264), this protein is Elongation factor P.